Consider the following 264-residue polypeptide: uncharacterized protein (264 aa).

8–15 (IQGGTGKT) contributes to the ATP binding site.

This is an uncharacterized protein from Methanocaldococcus jannaschii (strain ATCC 43067 / DSM 2661 / JAL-1 / JCM 10045 / NBRC 100440) (Methanococcus jannaschii).